A 117-amino-acid polypeptide reads, in one-letter code: MNNIIKMLNDEQMKKDVPDFGPGDTVVVQVRVKEGDKERLQAFEGVVIAKRNRGLHSAFTVRKISNGEGVERAFQTHSPLISSIEVKRRGRVRRAKLYYLRERSGKSARIREKLATK.

Belongs to the bacterial ribosomal protein bL19 family.

This protein is located at the 30S-50S ribosomal subunit interface and may play a role in the structure and function of the aminoacyl-tRNA binding site. The sequence is that of Large ribosomal subunit protein bL19 from Shewanella amazonensis (strain ATCC BAA-1098 / SB2B).